We begin with the raw amino-acid sequence, 420 residues long: Ribosome biogenesis protein WDR12 homolog (420 aa).

The interval 10–92 is ubiquitin-like (UBL) domain; that stretch reads VQVHLKTKQE…EDAIEIEYVE (83 aa). 7 WD repeats span residues 104–142, 143–185, 192–231, 250–288, 290–329, 335–375, and 379–417; these read LHDD…LTIS, GHTA…NSVE, GHER…AVEG, GHRE…IKTE, STNK…GSVV, GHNA…APLY, and GHGE…ADDA.

It belongs to the WD repeat WDR12/YTM1 family.

Its subcellular location is the nucleus. It is found in the nucleolus. The protein localises to the nucleoplasm. Required for maturation of ribosomal RNAs and formation of the large ribosomal subunit. The sequence is that of Ribosome biogenesis protein WDR12 homolog from Drosophila yakuba (Fruit fly).